A 370-amino-acid polypeptide reads, in one-letter code: TD and POZ domain-containing protein 4 (370 aa).

Residues Lys19 to Val149 form the MATH domain. Positions Thr188–Val251 constitute a BTB domain.

It belongs to the Tdpoz family.

The sequence is that of TD and POZ domain-containing protein 4 from Mus musculus (Mouse).